A 145-amino-acid polypeptide reads, in one-letter code: UPF0201 protein LS215_1276 (145 aa).

Belongs to the UPF0201 family.

The protein is UPF0201 protein LS215_1276 of Saccharolobus islandicus (strain L.S.2.15 / Lassen #1) (Sulfolobus islandicus).